The following is a 723-amino-acid chain: Probable inactive serine/threonine-protein kinase fnkD (723 aa).

One can recognise a Protein kinase domain in the interval 33–276; the sequence is WEIITQLESN…TTSLPKYSTL (244 aa). FNIP repeat units follow at residues 301 to 342, 343 to 384, 385 to 426, 524 to 565, 566 to 606, and 647 to 690; these read FNQP…ELAS, FNQT…LLSS, FNQP…SLAS, FNQS…ILPS, FNHP…LGDE, and FNIE…FGIT.

Belongs to the protein kinase superfamily. STE Ser/Thr protein kinase family.

This chain is Probable inactive serine/threonine-protein kinase fnkD (fnkD-1), found in Dictyostelium discoideum (Social amoeba).